Here is a 200-residue protein sequence, read N- to C-terminus: Small ribosomal subunit protein uS4 (200 aa).

The segment at 22 to 42 (TGKELEKRPYAPGPHGPGQRK) is disordered. In terms of domain architecture, S4 RNA-binding spans 92–155 (TRLDNLVYRL…QNLAVVKESV (64 aa)).

The protein belongs to the universal ribosomal protein uS4 family. In terms of assembly, part of the 30S ribosomal subunit. Contacts protein S5. The interaction surface between S4 and S5 is involved in control of translational fidelity.

Functionally, one of the primary rRNA binding proteins, it binds directly to 16S rRNA where it nucleates assembly of the body of the 30S subunit. Its function is as follows. With S5 and S12 plays an important role in translational accuracy. In Bacillus pumilus (strain SAFR-032), this protein is Small ribosomal subunit protein uS4.